Reading from the N-terminus, the 326-residue chain is Putative ankyrin repeat protein L25 (326 aa).

ANK repeat units lie at residues 11–40, 42–65, 66–95, 96–125, 127–154, 155–184, 185–214, 216–244, 246–274, and 275–304; these read RSEY…DLNV, KLFY…NIHV, DDEF…DIHV, NDDA…DIHA, NELV…DIHA, EDDE…NFRA, ENDY…DIHA, DEYA…DIHA, NDYG…NIHA, and KDDY…NIHA.

The chain is Putative ankyrin repeat protein L25 from Acanthamoeba polyphaga mimivirus (APMV).